A 361-amino-acid chain; its full sequence is Dihydroorotate dehydrogenase (quinone) (361 aa).

FMN is bound by residues 69-73 (AGFDK) and Thr-93. Lys-73 provides a ligand contact to substrate. Residue 118 to 122 (NRLGF) coordinates substrate. FMN contacts are provided by Asn-147 and Asn-180. Residue Asn-180 participates in substrate binding. The active-site Nucleophile is the Ser-183. A substrate-binding site is contributed by Asn-185. FMN contacts are provided by Lys-221 and Thr-249. Substrate is bound at residue 250–251 (NT). Residues Gly-271, Gly-300, and 321–322 (YT) each bind FMN.

Belongs to the dihydroorotate dehydrogenase family. Type 2 subfamily. Monomer. Requires FMN as cofactor.

It localises to the cell membrane. The catalysed reaction is (S)-dihydroorotate + a quinone = orotate + a quinol. It functions in the pathway pyrimidine metabolism; UMP biosynthesis via de novo pathway; orotate from (S)-dihydroorotate (quinone route): step 1/1. Catalyzes the conversion of dihydroorotate to orotate with quinone as electron acceptor. The polypeptide is Dihydroorotate dehydrogenase (quinone) (Roseiflexus sp. (strain RS-1)).